Consider the following 386-residue polypeptide: 3-ketosteroid-9-alpha-monooxygenase, oxygenase component (386 aa).

Residues 26 to 128 (WHCLGVAKDY…TDVRSGLLFV (103 aa)) enclose the Rieske domain. Cys67, His69, Cys86, and His89 together coordinate [2Fe-2S] cluster. Asn175, His181, His186, and Asp304 together coordinate Fe cation.

In terms of assembly, homotrimer. The two-component system 3-ketosteroid-9-alpha-monooxygenase is composed of an oxygenase component KshA and a reductase component KshB. The cofactor is [2Fe-2S] cluster. Fe cation is required as a cofactor.

The enzyme catalyses androsta-1,4-diene-3,17-dione + 2 reduced [2Fe-2S]-[ferredoxin] + O2 + 2 H(+) = 9alpha-hydroxyandrosta-1,4-diene-3,17-dione + 2 oxidized [2Fe-2S]-[ferredoxin] + H2O. It carries out the reaction androst-4-ene-3,17-dione + NADH + O2 + H(+) = 9alpha-hydroxy-androst-4-ene-3,17-dione + NAD(+) + H2O. It catalyses the reaction 3-oxochol-4-en-22-oate + NADH + O2 + H(+) = 9alpha-hydroxy-3-oxochol-4-en-22-oate + NAD(+) + H2O. The catalysed reaction is 3-oxochola-1,4-dien-22-oate + NADH + O2 + H(+) = 9alpha-hydroxy-3-oxochola-1,4-dien-22-oate + NAD(+) + H2O. The enzyme catalyses 3-oxochol-4-en-22-oyl-CoA + NADH + O2 + H(+) = 9alpha-hydroxy-3-oxochol-4-en-22-oyl-CoA + NAD(+) + H2O. It carries out the reaction 3-oxochola-1,4-dien-22-oyl-CoA + NADH + O2 + H(+) = 9alpha-hydroxy-3-oxochola-1,4-dien-22-oyl-CoA + NAD(+) + H2O. It participates in lipid metabolism; steroid biosynthesis. Involved in the degradation of cholesterol. Catalyzes the introduction of a 9a-hydroxyl moiety into 1,4-androstadiene-3,17-dione (ADD) to yield the 9alpha-hydroxy-1,4-androstadiene-3,17-dione (9OHADD) intermediate which spontaneously form 3-hydroxy-9,10-seconandrost-1,3,5(10)-triene-9,17-dione (HSA) via the meta-cleavage of ring B with concomitant aromatization of ring A. KSH is also able to use 4-androstene-3,17-dione (AD), 3-oxo-23,24-bisnorcholesta-4-en-22-oate (4-BNC), 3-oxo-23,24-bisnorcholesta-1,4-dien-22-oate (1,4-BNC), 3-oxo-23,24-bisnorcholesta-4-en-22-oyl-coenzyme A thioester (4-BNC-CoA) and 3-oxo-23,24-bisnorcholesta-1,4-dien-22-oyl-coenzyme A thioester (1,4-BNC-CoA) as substrates. This is 3-ketosteroid-9-alpha-monooxygenase, oxygenase component (kshA) from Mycobacterium tuberculosis (strain ATCC 25618 / H37Rv).